A 126-amino-acid chain; its full sequence is Large ribosomal subunit protein uL22 (126 aa).

The protein belongs to the universal ribosomal protein uL22 family. Part of the 50S ribosomal subunit.

This protein binds specifically to 23S rRNA; its binding is stimulated by other ribosomal proteins, e.g. L4, L17, and L20. It is important during the early stages of 50S assembly. It makes multiple contacts with different domains of the 23S rRNA in the assembled 50S subunit and ribosome. In terms of biological role, the globular domain of the protein is located near the polypeptide exit tunnel on the outside of the subunit, while an extended beta-hairpin is found that lines the wall of the exit tunnel in the center of the 70S ribosome. In Bradyrhizobium sp. (strain BTAi1 / ATCC BAA-1182), this protein is Large ribosomal subunit protein uL22.